We begin with the raw amino-acid sequence, 272 residues long: Magnetosome protein MamQ 1 (272 aa).

Residues 1–46 are Cytoplasmic-facing; sequence MALGDANVGSAPGVDFSALQRVKQSEELLAQLYVVEETPRRLGRGP. A helical transmembrane segment spans residues 47-67; the sequence is VHALMVISVLSVVAFIATLLM. Residues 68–272 are Lumenal-facing; the sequence is RYNTFVTMSE…PLNHAQDIKK (205 aa).

Belongs to the LemA family.

The protein resides in the magnetosome membrane. In terms of biological role, essential for magnetosome formation. Can be used to induce magnetosome formation. The sequence is that of Magnetosome protein MamQ 1 (mamQ1) from Paramagnetospirillum magneticum (strain ATCC 700264 / AMB-1) (Magnetospirillum magneticum).